The sequence spans 467 residues: Ribulose bisphosphate carboxylase large chain (467 aa).

Residues 1–2 constitute a propeptide that is removed on maturation; that stretch reads MS. Residue P3 is modified to N-acetylproline. Position 14 is an N6,N6,N6-trimethyllysine (K14). Substrate contacts are provided by N123 and T173. The active-site Proton acceptor is K175. K177 contacts substrate. Positions 201, 203, and 204 each coordinate Mg(2+). At K201 the chain carries N6-carboxylysine. H294 (proton acceptor) is an active-site residue. Residues R295, H327, and S379 each contribute to the substrate site.

Belongs to the RuBisCO large chain family. Type I subfamily. In terms of assembly, heterohexadecamer of 8 large chains and 8 small chains; disulfide-linked. The disulfide link is formed within the large subunit homodimers. Mg(2+) is required as a cofactor. In terms of processing, the disulfide bond which can form in the large chain dimeric partners within the hexadecamer appears to be associated with oxidative stress and protein turnover.

It localises to the plastid. The protein localises to the chloroplast. It carries out the reaction 2 (2R)-3-phosphoglycerate + 2 H(+) = D-ribulose 1,5-bisphosphate + CO2 + H2O. The catalysed reaction is D-ribulose 1,5-bisphosphate + O2 = 2-phosphoglycolate + (2R)-3-phosphoglycerate + 2 H(+). In terms of biological role, ruBisCO catalyzes two reactions: the carboxylation of D-ribulose 1,5-bisphosphate, the primary event in carbon dioxide fixation, as well as the oxidative fragmentation of the pentose substrate in the photorespiration process. Both reactions occur simultaneously and in competition at the same active site. The chain is Ribulose bisphosphate carboxylase large chain from Calamus usitatus (Palm tree).